A 203-amino-acid chain; its full sequence is MRASRPVVHPVEAPPPAALAVAAAAVAVEAGVGAGGGAAAHGGENAQPRGVRMKDPPGAPGTPGGLGLRLVQAFFAAAALAVMASTDDFPSVSAFCYLVAAAILQCLWSLSLAVVDIYALLVKRSLRNPQAVCIFTIGDGITGTLTLGAACASAGITVLIGNDLNICANNHCASFETATAMAFISWFALAPSCVLNFWSMASR.

Residues 1–63 (MRASRPVVHP…KDPPGAPGTP (63 aa)) are Cytoplasmic-facing. The tract at residues 39-58 (AAHGGENAQPRGVRMKDPPG) is disordered. A helical transmembrane segment spans residues 64 to 84 (GGLGLRLVQAFFAAAALAVMA). Residues 85–94 (STDDFPSVSA) are Extracellular-facing. A helical membrane pass occupies residues 95–115 (FCYLVAAAILQCLWSLSLAVV). Over 116 to 139 (DIYALLVKRSLRNPQAVCIFTIGD) the chain is Cytoplasmic. Residues 140–160 (GITGTLTLGAACASAGITVLI) form a helical membrane-spanning segment. Over 161-177 (GNDLNICANNHCASFET) the chain is Extracellular. Residues 178–198 (ATAMAFISWFALAPSCVLNFW) form a helical membrane-spanning segment. The Cytoplasmic segment spans residues 199 to 203 (SMASR).

The protein belongs to the Casparian strip membrane proteins (CASP) family. As to quaternary structure, homodimer and heterodimers.

The protein localises to the cell membrane. The chain is CASP-like protein 5A2 from Oryza sativa subsp. indica (Rice).